The primary structure comprises 100 residues: Small ribosomal subunit protein uS14 (100 aa).

It belongs to the universal ribosomal protein uS14 family. Part of the 30S ribosomal subunit. Contacts proteins S3 and S10.

Binds 16S rRNA, required for the assembly of 30S particles and may also be responsible for determining the conformation of the 16S rRNA at the A site. This chain is Small ribosomal subunit protein uS14, found in Synechococcus sp. (strain CC9605).